A 117-amino-acid chain; its full sequence is G antigen 1 (117 aa).

A disordered region spans residues 1 to 117; the sequence is MSWRGRSTYY…PEEGEGQSQC (117 aa). Acidic residues-rich tracts occupy residues 32 to 45 and 87 to 96; these read FSDE…EEGE and ECEDGPDGQE.

This sequence belongs to the GAGE family. Expressed in a variety of tumor tissues but not in normal tissues, except testis.

Its function is as follows. Antigen, recognized on melanoma by autologous cytolytic T-lymphocytes. In Homo sapiens (Human), this protein is G antigen 1.